Reading from the N-terminus, the 475-residue chain is Tubulin gamma-1 chain (475 aa).

GTP is bound at residue 142 to 148 (AGGTGSG). Positions 453–475 (VKRGNGPVDSKSEDSRSVTSAGS) are disordered.

It belongs to the tubulin family. In terms of assembly, interacts with Ote.

It localises to the cytoplasm. The protein localises to the cytoskeleton. It is found in the microtubule organizing center. The protein resides in the centrosome. Its subcellular location is the perinuclear region. Its function is as follows. Tubulin is the major constituent of microtubules. The gamma chain is found at microtubule organizing centers (MTOC) such as the spindle poles or the centrosome, suggesting that it is involved in the minus-end nucleation of microtubule assembly. In Drosophila melanogaster (Fruit fly), this protein is Tubulin gamma-1 chain (gammaTub23C).